The chain runs to 230 residues: Large ribosomal subunit protein uL1 (230 aa).

Belongs to the universal ribosomal protein uL1 family. In terms of assembly, part of the 50S ribosomal subunit.

Functionally, binds directly to 23S rRNA. The L1 stalk is quite mobile in the ribosome, and is involved in E site tRNA release. In terms of biological role, protein L1 is also a translational repressor protein, it controls the translation of the L11 operon by binding to its mRNA. The protein is Large ribosomal subunit protein uL1 of Bifidobacterium longum (strain DJO10A).